Reading from the N-terminus, the 131-residue chain is Profilin-3 (131 aa).

Cysteine 13 and cysteine 115 are joined by a disulfide. The Involved in PIP2 interaction motif lies at 81–97 (AVIRGKKGAGGITIKKT). A Phosphothreonine modification is found at threonine 111.

The protein belongs to the profilin family. Occurs in many kinds of cells as a complex with monomeric actin in a 1:1 ratio. Phosphorylated by MAP kinases.

Its subcellular location is the cytoplasm. It is found in the cytoskeleton. Binds to actin and affects the structure of the cytoskeleton. At high concentrations, profilin prevents the polymerization of actin, whereas it enhances it at low concentrations. By binding to PIP2, it inhibits the formation of IP3 and DG. The sequence is that of Profilin-3 (PRO3) from Phleum pratense (Common timothy).